A 117-amino-acid chain; its full sequence is MTCSPLLLTLLIHCTGSWAQSVLTQPPSVSAAPGQKVTISCSGSSSNIGNNYVSWYQQLPGTAPKLLIYDNNKRPSGIPDRFSGSKSGTSATLGITGLQTGDEADYYCGTWDSSLSA.

The N-terminal stretch at 1–19 (MTCSPLLLTLLIHCTGSWA) is a signal peptide. Gln20 carries the pyrrolidone carboxylic acid modification. The segment at 20-44 (QSVLTQPPSVSAAPGQKVTISCSGS) is framework-1. The 98-residue stretch at 20–117 (QSVLTQPPSV…CGTWDSSLSA (98 aa)) folds into the Ig-like domain. Cys41 and Cys108 are oxidised to a cystine. The complementarity-determining-1 stretch occupies residues 45–52 (SSNIGNNY). The tract at residues 53–69 (VSWYQQLPGTAPKLLIY) is framework-2. The interval 70 to 72 (DNN) is complementarity-determining-2. Positions 73-108 (KRPSGIPDRFSGSKSGTSATLGITGLQTGDEADYYC) are framework-3. The complementarity-determining-3 stretch occupies residues 109 to 117 (GTWDSSLSA).

Immunoglobulins are composed of two identical heavy chains and two identical light chains; disulfide-linked.

Its subcellular location is the secreted. It is found in the cell membrane. In terms of biological role, v region of the variable domain of immunoglobulin light chains that participates in the antigen recognition. Immunoglobulins, also known as antibodies, are membrane-bound or secreted glycoproteins produced by B lymphocytes. In the recognition phase of humoral immunity, the membrane-bound immunoglobulins serve as receptors which, upon binding of a specific antigen, trigger the clonal expansion and differentiation of B lymphocytes into immunoglobulins-secreting plasma cells. Secreted immunoglobulins mediate the effector phase of humoral immunity, which results in the elimination of bound antigens. The antigen binding site is formed by the variable domain of one heavy chain, together with that of its associated light chain. Thus, each immunoglobulin has two antigen binding sites with remarkable affinity for a particular antigen. The variable domains are assembled by a process called V-(D)-J rearrangement and can then be subjected to somatic hypermutations which, after exposure to antigen and selection, allow affinity maturation for a particular antigen. The sequence is that of Immunoglobulin lambda variable 1-51 from Homo sapiens (Human).